The chain runs to 1657 residues: Androglobin (1657 aa).

The segment covering 1–11 (MASKQAKRKEV) has biased composition (basic residues). 2 disordered regions span residues 1–40 (MASK…SFEQ) and 321–398 (TKEN…SSDV). In terms of domain architecture, Calpain catalytic spans 70-402 (KDKTAKSPIF…RPSSDVQYSM (333 aa)). The span at 321–386 (TKENKDGKDG…DGEKEKEKFK (66 aa)) shows a compositional bias: basic and acidic residues. Residues 762-889 (HVCSMTTFVI…EDVSLAEWVD (128 aa)) enclose the Globin; C-terminal part domain. Heme b contacts are provided by glutamine 791 and histidine 823. The IQ domain maps to 905-934 (EIAAAVKIQSMWKGCYVRLLMKARKPETKE). Residues 935 to 967 (NVTVADTLQKIWAVLEMNLEQYALSLLRLMFKS) form the Globin; N-terminal part domain. Disordered stretches follow at residues 1184-1226 (SKQV…TDTG), 1288-1356 (KHEE…QEDP), 1422-1459 (TTDT…ADIK), and 1638-1657 (IEKK…GKKK). Positions 1321-1336 (EKSAEKEKLAKEKQAP) are enriched in basic and acidic residues. Polar residues-rich tracts occupy residues 1341-1351 (QQVQMPTAVHS) and 1422-1443 (TTDT…SQTK). A coiled-coil region spans residues 1585-1640 (DEVLEMYGEMRDSVDEARQKILDIREVYRNKLLEAERLRMEALAAQEAAVKIEIEK).

It in the central section; belongs to the globin family. This sequence in the N-terminal section; belongs to the peptidase C2 family. As to quaternary structure, interacts with septin SEPT10; contributes to in vitro proteolytic cleavage of SEPT10 in a calmodulin-dependent manner. Interacts with CFAP69. Interacts with SPEF2. May interact with calmodulin. Strongly expressed in testis and lung. Weakly expressed in heart, brain, spleen, kidney and tongue.

The protein resides in the cell projection. It is found in the cilium. Its subcellular location is the flagellum. Functionally, probable chimeric globin with a bis-histidyl six-coordinate heme-iron atom through which it could bind dioxygen, carbon monoxide and nitric oxide. Required for sperm flagellum formation and maturation of elongating spermatids, thus playing an essential role in male fertility. The protein is Androglobin of Mus musculus (Mouse).